The primary structure comprises 169 residues: Centrin-1 (169 aa).

An essential for homooligomerization region spans residues 1-21; that stretch reads MHSRKGASSLPRGRGAGKKTE. A disordered region spans residues 1 to 25; that stretch reads MHSRKGASSLPRGRGAGKKTELTEE. EF-hand domains are found at residues 25–60, 61–96, 98–133, and 134–169; these read EQRQ…LGFE, PKKE…KMAE, DPRE…LGEN, and LTDE…TNLF. Residues D38, D40, S42, C44, E49, D74, D76, T78, S80, and E85 each coordinate Ca(2+).

This sequence belongs to the centrin family. Monomer. Homooligomerizes in a Ca(2+)-dependent manner. Interaction via the C-terminus with other proteins disrupts and/or prevents homooligomerization. Interacts with SFI1.

The protein localises to the cytoplasm. It is found in the cytoskeleton. Its subcellular location is the microtubule organizing center. The protein resides in the centrosome. In terms of biological role, acts as a calcium sensor. Part of the centrosome outer core complex. The sequence is that of Centrin-1 from Toxoplasma gondii (strain ATCC 50611 / Me49).